Here is a 333-residue protein sequence, read N- to C-terminus: Tryptophan--tRNA ligase (333 aa).

ATP is bound by residues 9 to 11 (QPT) and 17 to 18 (GN). The 'HIGH' region signature appears at 10 to 18 (PTNNLTLGN). Aspartate 140 contributes to the L-tryptophan binding site. Residues 152–154 (GQD), isoleucine 191, and 200–204 (KMSKS) each bind ATP. Positions 200–204 (KMSKS) match the 'KMSKS' region motif.

The protein belongs to the class-I aminoacyl-tRNA synthetase family. Homodimer.

Its subcellular location is the cytoplasm. It catalyses the reaction tRNA(Trp) + L-tryptophan + ATP = L-tryptophyl-tRNA(Trp) + AMP + diphosphate + H(+). In terms of biological role, catalyzes the attachment of tryptophan to tRNA(Trp). This chain is Tryptophan--tRNA ligase, found in Ureaplasma parvum serovar 3 (strain ATCC 700970).